Reading from the N-terminus, the 127-residue chain is Large ribosomal subunit protein uL18 (127 aa).

The disordered stretch occupies residues 1–26 (MASTLTVRKSLSDRAKARARRQARGR). The segment covering 17-26 (ARARRQARGR) has biased composition (basic residues).

Belongs to the universal ribosomal protein uL18 family. Part of the 50S ribosomal subunit; part of the 5S rRNA/L5/L18/L25 subcomplex. Contacts the 5S and 23S rRNAs.

In terms of biological role, this is one of the proteins that bind and probably mediate the attachment of the 5S RNA into the large ribosomal subunit, where it forms part of the central protuberance. In Cutibacterium acnes (strain DSM 16379 / KPA171202) (Propionibacterium acnes), this protein is Large ribosomal subunit protein uL18.